A 268-amino-acid polypeptide reads, in one-letter code: MSSSSPILLMFIFSIWMLISYSESTDYLVGDSENSWKFPLPTRHALTRWASNYQFIVGDTITFQYNNKTESVHEVEEEDYDRCGIRGEHVDHYDGNTMVVLKKTGIHHFISGKKRHCRLGLKLAVVVMVAPVLSSPPPPPSPPTPRSSTPIPHPPRRSLPSPPSPSPSPSPSPSPSPSPRSTPIPHPRKRSPASPSPSPSLSKSPSPSESPSLAPSPSDSVASLAPSSSPSDESPSPAPSPSSSGSKGGGAGHGFLEVSIAMMMFLIF.

Residues 1 to 24 (MSSSSPILLMFIFSIWMLISYSES) form the signal peptide. The Phytocyanin domain occupies 25-129 (TDYLVGDSEN…GLKLAVVVMV (105 aa)). Asparagine 67 carries N-linked (GlcNAc...) asparagine glycosylation. A disulfide bridge links cysteine 83 with cysteine 117. Pro residues-rich tracts occupy residues 134–145 (SSPPPPPSPPTP) and 160–185 (PSPPSPSPSPSPSPSPSPSPRSTPIP). Positions 134–253 (SSPPPPPSPP…SGSKGGGAGH (120 aa)) are disordered. The segment covering 199–235 (PSLSKSPSPSESPSLAPSPSDSVASLAPSSSPSDESP) has biased composition (low complexity). Residue serine 243 is the site of GPI-anchor amidated serine attachment. Residues 244–268 (SGSKGGGAGHGFLEVSIAMMMFLIF) constitute a propeptide, removed in mature form.

This sequence belongs to the early nodulin-like (ENODL) family.

It is found in the cell membrane. Its function is as follows. May act as a carbohydrate transporter. The sequence is that of Early nodulin-20 from Medicago truncatula (Barrel medic).